The sequence spans 161 residues: Large ribosomal subunit protein uL30m (161 aa).

A mitochondrion-targeting transit peptide spans 1-34 (MAGILRLVVQWPPGRLQTVTKGVESLICTDWIRH).

Belongs to the universal ribosomal protein uL30 family. In terms of assembly, component of the mitochondrial large ribosomal subunit (mt-LSU). Mature mammalian 55S mitochondrial ribosomes consist of a small (28S) and a large (39S) subunit. The 28S small subunit contains a 12S ribosomal RNA (12S mt-rRNA) and 30 different proteins. The 39S large subunit contains a 16S rRNA (16S mt-rRNA), a copy of mitochondrial valine transfer RNA (mt-tRNA(Val)), which plays an integral structural role, and 52 different proteins.

The protein resides in the mitochondrion. This Homo sapiens (Human) protein is Large ribosomal subunit protein uL30m (MRPL30).